A 753-amino-acid polypeptide reads, in one-letter code: 5-methyltetrahydropteroyltriglutamate--homocysteine methyltransferase (753 aa).

5-methyltetrahydropteroyltri-L-glutamate is bound by residues 17–20 (RELK) and Lys-117. L-homocysteine-binding positions include 431-433 (IGS) and Glu-484. Residues 431 to 433 (IGS) and Glu-484 contribute to the L-methionine site. 5-methyltetrahydropteroyltri-L-glutamate-binding positions include 515 to 516 (RC) and Trp-561. Asp-599 lines the L-homocysteine pocket. An L-methionine-binding site is contributed by Asp-599. 5-methyltetrahydropteroyltri-L-glutamate is bound at residue Glu-605. Zn(2+) contacts are provided by His-641, Cys-643, and Glu-665. Residue His-694 is the Proton donor of the active site. Residue Cys-726 coordinates Zn(2+).

Belongs to the vitamin-B12 independent methionine synthase family. Requires Zn(2+) as cofactor.

The enzyme catalyses 5-methyltetrahydropteroyltri-L-glutamate + L-homocysteine = tetrahydropteroyltri-L-glutamate + L-methionine. It participates in amino-acid biosynthesis; L-methionine biosynthesis via de novo pathway; L-methionine from L-homocysteine (MetE route): step 1/1. Its function is as follows. Catalyzes the transfer of a methyl group from 5-methyltetrahydrofolate to homocysteine resulting in methionine formation. The chain is 5-methyltetrahydropteroyltriglutamate--homocysteine methyltransferase from Escherichia coli O8 (strain IAI1).